A 239-amino-acid chain; its full sequence is 2,3,4,5-tetrahydropyridine-2,6-dicarboxylate N-acetyltransferase (239 aa).

This sequence belongs to the transferase hexapeptide repeat family. DapH subfamily.

It catalyses the reaction (S)-2,3,4,5-tetrahydrodipicolinate + acetyl-CoA + H2O = L-2-acetamido-6-oxoheptanedioate + CoA. The protein operates within amino-acid biosynthesis; L-lysine biosynthesis via DAP pathway; LL-2,6-diaminopimelate from (S)-tetrahydrodipicolinate (acetylase route): step 1/3. Functionally, catalyzes the transfer of an acetyl group from acetyl-CoA to tetrahydrodipicolinate. This chain is 2,3,4,5-tetrahydropyridine-2,6-dicarboxylate N-acetyltransferase, found in Staphylococcus aureus (strain bovine RF122 / ET3-1).